Here is a 340-residue protein sequence, read N- to C-terminus: Putative methionyl-tRNA formyltransferase (340 aa).

Belongs to the Fmt family.

Its subcellular location is the mitochondrion. It localises to the mitochondrion matrix. The protein resides in the cytoplasm. The catalysed reaction is L-methionyl-tRNA(fMet) + (6R)-10-formyltetrahydrofolate = N-formyl-L-methionyl-tRNA(fMet) + (6S)-5,6,7,8-tetrahydrofolate + H(+). Functionally, formylates methionyl-tRNA in mitochondria and the cytoplasm. Responsible for the formylation of the N-terminally formylated (Nt-formylated) mitochondrial matrix proteins that are encoded by mitochondrial DNA. Nt-formylated proteins in the cytoplasm are strongly up-regulated in stationary phase or upon starvation for specific amino acids and are targeted for degradation by an E3 ubiquitin ligase-mediated fMet/N-end rule pathway. Increased Nt-formylation of cytosolic proteins appears to be important for adaptation to these stresses. The polypeptide is Putative methionyl-tRNA formyltransferase (fmt1) (Schizosaccharomyces pombe (strain 972 / ATCC 24843) (Fission yeast)).